The primary structure comprises 359 residues: N-acetylneuraminate-9-phosphate synthase (359 aa).

Residues lysine 61, lysine 74, and lysine 79 each carry the N6-acetyllysine modification. Serine 275 bears the Phosphoserine mark. Lysine 290 is modified (N6-acetyllysine). An AFP-like domain is found at 294–353 (SVVAKVKIPEGTILTMDMLTVKVGEPKGYPPEDIFNLVGKKVLVTVEEDDTIMEELVDNH).

In terms of tissue distribution, ubiquitous.

The enzyme catalyses aldehydo-N-acetyl-D-mannosamine 6-phosphate + phosphoenolpyruvate + H2O = N-acetylneuraminate 9-phosphate + phosphate. It carries out the reaction aldehydo-D-mannose 6-phosphate + phosphoenolpyruvate + H2O = 3-deoxy-D-glycero-beta-D-galacto-non-2-ulopyranosonate 9-phosphate + phosphate. Catalyzes the condensation of phosphoenolpyruvate (PEP) and N-acetylmannosamine 6-phosphate (ManNAc-6-P) to synthesize N-acetylneuraminate-9-phosphate (Neu5Ac-9-P). Also catalyzes the condensation of PEP and D-mannose 6-phosphate (Man-6-P) to produce 3-deoxy-D-glycero-beta-D-galacto-non-2-ulopyranosonate 9-phosphate (KDN-9-P). Neu5Ac-9-P and KDN-9-P are the phosphorylated forms of sialic acids N-acetylneuraminic acid (Neu5Ac) and deaminoneuraminic acid (KDN), respectively. Required for brain and skeletal development. The polypeptide is N-acetylneuraminate-9-phosphate synthase (Homo sapiens (Human)).